The following is a 360-amino-acid chain: tRNA-specific 2-thiouridylase MnmA (360 aa).

Residues 9 to 16 and leucine 35 contribute to the ATP site; that span reads AMSGGVDS. Residue cysteine 104 is the Nucleophile of the active site. A disulfide bond links cysteine 104 and cysteine 197. Glycine 128 is an ATP binding site. Positions 147-149 are interaction with tRNA; the sequence is KDQ. Cysteine 197 (cysteine persulfide intermediate) is an active-site residue.

It belongs to the MnmA/TRMU family.

It is found in the cytoplasm. It catalyses the reaction S-sulfanyl-L-cysteinyl-[protein] + uridine(34) in tRNA + AH2 + ATP = 2-thiouridine(34) in tRNA + L-cysteinyl-[protein] + A + AMP + diphosphate + H(+). Catalyzes the 2-thiolation of uridine at the wobble position (U34) of tRNA, leading to the formation of s(2)U34. This is tRNA-specific 2-thiouridylase MnmA from Salinispora tropica (strain ATCC BAA-916 / DSM 44818 / JCM 13857 / NBRC 105044 / CNB-440).